The sequence spans 258 residues: Very-long-chain aldehyde decarbonylase GL1-9 (258 aa).

A run of 5 helical transmembrane segments spans residues 13 to 33 (MGTF…QLVL), 63 to 83 (GVLL…MVTS), 88 to 108 (VVVQ…MLVM), 149 to 169 (PLEG…VSGM), and 175 to 195 (VFFF…LWLP). Positions 101 to 237 (FLVAMLVMDS…FSIWDRILGT (137 aa)) constitute a Fatty acid hydroxylase domain.

Belongs to the sterol desaturase family. In terms of assembly, homodimer.

Its subcellular location is the endoplasmic reticulum membrane. It carries out the reaction a long-chain fatty aldehyde + 2 NADPH + O2 + H(+) = a long-chain alkane + formate + 2 NADP(+) + H2O. In terms of biological role, aldehyde decarbonylase involved in the conversion of aldehydes to alkanes. Core component of a very-long-chain alkane synthesis complex. This Oryza sativa subsp. indica (Rice) protein is Very-long-chain aldehyde decarbonylase GL1-9.